A 342-amino-acid chain; its full sequence is MKVGVLTGGGDCPGLNAVIRAVVRKGVQEYGYDFTGFRDGWRGPLEGDTVPLDIPAVRGILPRGGTVLGSSRTNPLKQRDGIRRIKDNLAALGVEALITIGGEDTLGVATRLADEYGVPCVGVPKTIDNDLSATDYTFGFDTAVGIATEAIDRLHTTAESHMRVLVVEVMGRHAGWIALHSGLAGGANVILIPEQRFDVEQVCSWVTSRFRASYAPIVVVAEGAMPRDGDMVLKDESLDSYGHVRLSGVGEWLAKQIEKRTGNEARTTVLGHVQRGGTPSAFDRWLATRFGLHAVDCVHDGDFGKMVALRGTDIVRVPIAEATARLKTVDPALYEEVGVFFG.

G10 contacts diphosphate. A Mg(2+)-binding site is contributed by E103. Residues 126–128 (TID), R163, 170–172 (MGR), E222, R266, and 272–275 (HVQR) contribute to the substrate site. Residue D128 is the Proton acceptor of the active site.

It belongs to the phosphofructokinase type A (PFKA) family. Mixed-substrate PFK group III subfamily. As to quaternary structure, homodimer or homotetramer. The cofactor is Mg(2+).

The protein resides in the cytoplasm. It carries out the reaction beta-D-fructose 6-phosphate + diphosphate = beta-D-fructose 1,6-bisphosphate + phosphate + H(+). It participates in carbohydrate degradation; glycolysis; D-glyceraldehyde 3-phosphate and glycerone phosphate from D-glucose: step 3/4. Non-allosteric. In terms of biological role, catalyzes the phosphorylation of D-fructose 6-phosphate, the first committing step of glycolysis. Uses inorganic phosphate (PPi) as phosphoryl donor instead of ATP like common ATP-dependent phosphofructokinases (ATP-PFKs), which renders the reaction reversible, and can thus function both in glycolysis and gluconeogenesis. Consistently, PPi-PFK can replace the enzymes of both the forward (ATP-PFK) and reverse (fructose-bisphosphatase (FBPase)) reactions. The protein is Pyrophosphate--fructose 6-phosphate 1-phosphotransferase of Streptomyces coelicolor (strain ATCC BAA-471 / A3(2) / M145).